Consider the following 1360-residue polypeptide: Ubiquitin carboxyl-terminal hydrolase 19 (1360 aa).

The tract at residues 1–46 (MSAGASATGPRRGPPGLEEATSKKKQKDRANLESKDGDARRVSLPR) is disordered. The Cytoplasmic segment spans residues 1–1333 (MSAGASATGP…TTPDEGCLRY (1333 aa)). A compositionally biased stretch (basic and acidic residues) spans 28–46 (DRANLESKDGDARRVSLPR). Positions 51–140 (KDELLLDWRQ…VPLLTWPSLL (90 aa)) constitute a CS 1 domain. The disordered stretch occupies residues 163 to 239 (PIALEPGSEP…APSFLSDSAT (77 aa)). Residues 170 to 181 (SEPRRAKQEARN) show a composition bias toward basic and acidic residues. Residues 189-199 (GEVGSGAGPGT) are compositionally biased toward gly residues. Phosphoserine is present on Ser220. The CS 2 domain occupies 322–424 (LAFVKNDSYE…RQSQRWGGLE (103 aa)). Positions 432–482 (VGGAKVAVPTGPTPLDSTPPGGGPHPLTGQEEARAVEKEKPKARSEDSGLD) are disordered. A compositionally biased stretch (basic and acidic residues) spans 462–478 (EEARAVEKEKPKARSED). The 718-residue stretch at 539–1256 (TGLVNLGNTC…YAYVLFYRRR (718 aa)) folds into the USP domain. Cys548 (nucleophile) is an active-site residue. Residues Cys833, Cys836, Cys850, Cys853, Cys859, Cys863, His871, and Cys875 each coordinate Zn(2+). The segment at 833–875 (CAACQRKQQSEEEKLKRCTRCYRVGYCNQFCQKTHWPDHKGLC) adopts an MYND-type zinc-finger fold. The disordered stretch occupies residues 965–988 (DTGAHRVWPPADRGPVPSTSGLSS). His1207 serves as the catalytic Proton acceptor. Residues 1259 to 1274 (PVERPPRASHSEHHPD) show a composition bias toward basic and acidic residues. The disordered stretch occupies residues 1259 to 1281 (PVERPPRASHSEHHPDLGPAAEA). The helical transmembrane segment at 1334 to 1354 (FVLGTVAALVALVLNVFYPLV) threads the bilayer. Topologically, residues 1355 to 1360 (SQSRWR) are lumenal.

As to quaternary structure, interacts with RNF123. Interacts with BIRC2/c-IAP1, BIRC3/c-IAP2 and XIAP/BIRC4. Interacts with HIF1A (via N-terminus).

It is found in the endoplasmic reticulum membrane. The enzyme catalyses Thiol-dependent hydrolysis of ester, thioester, amide, peptide and isopeptide bonds formed by the C-terminal Gly of ubiquitin (a 76-residue protein attached to proteins as an intracellular targeting signal).. In terms of biological role, deubiquitinating enzyme that regulates the degradation of various proteins by removing ubiquitin moieties, thereby preventing their proteasomal degradation. Stabilizes RNF123, which promotes CDKN1B degradation and contributes to cell proliferation. Decreases the levels of ubiquitinated proteins during skeletal muscle formation and acts to repress myogenesis. Modulates transcription of major myofibrillar proteins. Also involved in turnover of endoplasmic-reticulum-associated degradation (ERAD) substrates. Mechanistically, deubiquitinates and thereby stabilizes several E3 ligases involved in the ERAD pathway including SYVN1 or MARCHF6. Regulates the stability of other E3 ligases including BIRC2/c-IAP1 and BIRC3/c-IAP2 by preventing their ubiquitination. Required for cells to mount an appropriate response to hypoxia by rescuing HIF1A from degradation in a non-catalytic manner and by mediating the deubiquitination of FUNDC1. Attenuates mitochondrial damage and ferroptosis by targeting and stabilizing NADPH oxidase 4/NOX4. Negatively regulates TNF-alpha- and IL-1beta-triggered NF-kappa-B activation by hydrolyzing 'Lys-27'- and 'Lys-63'-linked polyubiquitin chains from MAP3K7. Modulates also the protein level and aggregation of polyQ-expanded huntingtin/HTT through HSP90AA1. The protein is Ubiquitin carboxyl-terminal hydrolase 19 (Usp19) of Mus musculus (Mouse).